The chain runs to 132 residues: Pro-MCH 2 (132 aa).

The first 24 residues, 1–24, serve as a signal peptide directing secretion; that stretch reads MRDSVLSVIFALALFLECYTPSMA. Cysteine 120 and cysteine 129 form a disulfide bridge.

This sequence belongs to the melanin-concentrating hormone family. As to expression, pituitary gland. Produced in neurons of lateral basal hypothalamus which project both to the brain and to the neural lobe of the pituitary gland from where MCH is released.

In terms of biological role, plays a role in skin pigmentation by antagonizing the action of melanotropin alpha. Induces melanin concentration within the melanophores. May participate in the control of the hypothalamo-pituitary adrenal gland axis by inhibiting the release of ACTH. In Oncorhynchus keta (Chum salmon), this protein is Pro-MCH 2 (mch2).